A 379-amino-acid chain; its full sequence is Chaperone protein DnaJ (379 aa).

The J domain occupies 5-70 (DYYETLEVSQ…QKRAAYDQYG (66 aa)). The CR-type zinc finger occupies 135–213 (GKSLEIKVPT…CRGQGRVEKT (79 aa)). Residues C148, C151, C165, C168, C187, C190, C201, and C204 each contribute to the Zn(2+) site. CXXCXGXG motif repeat units follow at residues 148–155 (CEPCDGSG), 165–172 (CSTCHGHG), 187–194 (CPTCSGKG), and 201–208 (CTSCRGQG).

The protein belongs to the DnaJ family. In terms of assembly, homodimer. Zn(2+) serves as cofactor.

It is found in the cytoplasm. Participates actively in the response to hyperosmotic and heat shock by preventing the aggregation of stress-denatured proteins and by disaggregating proteins, also in an autonomous, DnaK-independent fashion. Unfolded proteins bind initially to DnaJ; upon interaction with the DnaJ-bound protein, DnaK hydrolyzes its bound ATP, resulting in the formation of a stable complex. GrpE releases ADP from DnaK; ATP binding to DnaK triggers the release of the substrate protein, thus completing the reaction cycle. Several rounds of ATP-dependent interactions between DnaJ, DnaK and GrpE are required for fully efficient folding. Also involved, together with DnaK and GrpE, in the DNA replication of plasmids through activation of initiation proteins. In Colwellia maris, this protein is Chaperone protein DnaJ.